A 151-amino-acid chain; its full sequence is Nucleoside diphosphate kinase (151 aa).

6 residues coordinate ATP: K10, F58, R86, T92, R103, and N113. The Pros-phosphohistidine intermediate role is filled by H116.

Belongs to the NDK family. As to quaternary structure, homotetramer. It depends on Mg(2+) as a cofactor.

The protein resides in the cytoplasm. The catalysed reaction is dZDP + ATP = dZTP + ADP. It carries out the reaction a 2'-deoxyribonucleoside 5'-diphosphate + ATP = a 2'-deoxyribonucleoside 5'-triphosphate + ADP. It catalyses the reaction a ribonucleoside 5'-diphosphate + ATP = a ribonucleoside 5'-triphosphate + ADP. It participates in purine metabolism. Its function is as follows. Major role in the synthesis of nucleoside triphosphates other than ATP. The ATP gamma phosphate is transferred to the NDP beta phosphate via a ping-pong mechanism, using a phosphorylated active-site intermediate. In terms of biological role, (Microbial infection) Catalyzes the phosphorylation of dZDP to dZTP, when the bacterium is infected by a phage that produces the substrate for the synthesis of dZTP (2- amino-2'-deoxyadenosine 5'-triphosphate), which is then used by the phage as a DNA polymerase substrate. This is Nucleoside diphosphate kinase from Synechococcus sp. (strain CC9902).